A 676-amino-acid chain; its full sequence is MEGRVKNKAPAALQISAEQILLEAYERKETPLQQTEQIADLEELAEYQGRKRQEYEGALRRNRLNTGQWMRYAQWELEQREFARARSVFERALEVNSTHVPTWIRYIQCELKEKNINHARNLLDRAVTLLPRVDKLWFTYVATEETLGNIAGCRAVFERWMHWRPPVTAWAAYVNMEKRYREFDRARGILRRYVTVHPGAPAWNKWAKFEMEAGNRDTVREVYALGIDTLVEMAHGGVDFLDESLLAGWASFETRHREYERARALYTYGLEKLPKSKSAKLYADYTAFEKQYGAKEGIENVVLTKRRSKYEDQLKEDPADYDTWFSYITLGQESGLEADQIREIFERAVSNVPPHSKRLWRRYIFLWIKYAIWEELENKEVEKAREIYKTCISIIPHKKFTFAKVWLLWAKFEIRHGNLPEARKILGRGLGMSGGKPALYKGYIALEAKLREFDRCRKLYDKYVEKFAEFAAPWMEYAELEQMLGDEERARAIFELAVSQPEMEMPELVWKRFIEFEAEEENYDRARAIYRQLLDRTHGHIKVWISFAQFEVTVPAEDQELQYNDEGEAEIEVTEEAKARARSIFGEAWDALKAANKREERVVLFESWREFEEEHGDDKSKADLDKRKPTPVKKKRKLEDGTFEEYIDYVFPTDEEDKSFSKLLENARKWKLQNQS.

HAT repeat units lie at residues 46 to 78, 80 to 112, 114 to 146, 148 to 179, 181 to 212, 215 to 255, 257 to 291, 301 to 333, 336 to 369, 379 to 415, 417 to 449, 451 to 483, 485 to 519, 521 to 553, 576 to 614, and 620 to 652; these read EYQG…WELE, REFA…CELK, KNIN…TEET, GNIA…MEKR, REFD…FEME, NRDT…FETR, REYE…FEKQ, VVLT…LGQE, LEAD…LWIK, KEVE…FEIR, GNLP…LEAK, REFD…LEQM, GDEE…FEAE, ENYD…FEVT, EAKA…FEEE, and SKAD…YVFP. Positions 616-628 are enriched in basic and acidic residues; sequence GDDKSKADLDKRK. A disordered region spans residues 616-636; it reads GDDKSKADLDKRKPTPVKKKR.

Belongs to the crooked-neck family. Associated with the spliceosome.

It is found in the nucleus. Its function is as follows. Involved in pre-mRNA splicing and cell cycle progression. Required for the spliceosome assembly and initiation of the DNA replication. The sequence is that of Pre-mRNA-splicing factor CLF1 (CLF1) from Yarrowia lipolytica (strain CLIB 122 / E 150) (Yeast).